A 311-amino-acid chain; its full sequence is 4-diphosphocytidyl-2-C-methyl-D-erythritol kinase (311 aa).

Residue Lys10 is part of the active site. Residue Pro105–Ala115 coordinates ATP. Asp146 is a catalytic residue.

The protein belongs to the GHMP kinase family. IspE subfamily.

It catalyses the reaction 4-CDP-2-C-methyl-D-erythritol + ATP = 4-CDP-2-C-methyl-D-erythritol 2-phosphate + ADP + H(+). Its pathway is isoprenoid biosynthesis; isopentenyl diphosphate biosynthesis via DXP pathway; isopentenyl diphosphate from 1-deoxy-D-xylulose 5-phosphate: step 3/6. Its function is as follows. Catalyzes the phosphorylation of the position 2 hydroxy group of 4-diphosphocytidyl-2C-methyl-D-erythritol. The sequence is that of 4-diphosphocytidyl-2-C-methyl-D-erythritol kinase from Corynebacterium glutamicum (strain ATCC 13032 / DSM 20300 / JCM 1318 / BCRC 11384 / CCUG 27702 / LMG 3730 / NBRC 12168 / NCIMB 10025 / NRRL B-2784 / 534).